We begin with the raw amino-acid sequence, 401 residues long: Tyrosine--tRNA ligase (401 aa).

A 'HIGH' region motif is present at residues 42–51 (PTAPDIHLGH). Residues 226–230 (KMSKS) carry the 'KMSKS' region motif. Lysine 229 provides a ligand contact to ATP. The 61-residue stretch at 334–394 (MGLATLLKEA…GKRKFARVRL (61 aa)) folds into the S4 RNA-binding domain.

It belongs to the class-I aminoacyl-tRNA synthetase family. TyrS type 2 subfamily. As to quaternary structure, homodimer.

It is found in the cytoplasm. It carries out the reaction tRNA(Tyr) + L-tyrosine + ATP = L-tyrosyl-tRNA(Tyr) + AMP + diphosphate + H(+). Functionally, catalyzes the attachment of tyrosine to tRNA(Tyr) in a two-step reaction: tyrosine is first activated by ATP to form Tyr-AMP and then transferred to the acceptor end of tRNA(Tyr). This chain is Tyrosine--tRNA ligase, found in Haemophilus influenzae (strain ATCC 51907 / DSM 11121 / KW20 / Rd).